The primary structure comprises 340 residues: Protein RecA (340 aa).

65–72 is an ATP binding site; sequence GPESGGKT.

It belongs to the RecA family.

Its subcellular location is the cytoplasm. Its function is as follows. Can catalyze the hydrolysis of ATP in the presence of single-stranded DNA, the ATP-dependent uptake of single-stranded DNA by duplex DNA, and the ATP-dependent hybridization of homologous single-stranded DNAs. It interacts with LexA causing its activation and leading to its autocatalytic cleavage. This chain is Protein RecA, found in Thermus thermophilus (strain ATCC 27634 / DSM 579 / HB8).